A 184-amino-acid chain; its full sequence is Coordinator of PRMT5 and differentiation stimulator (184 aa).

N-acetylmethionine is present on M1. Residues 1 to 14 (MDLQAAGAQAQGAA) are compositionally biased toward low complexity. Positions 1–136 (MDLQAAGAQA…PYDADDIQES (136 aa)) are disordered. A compositionally biased stretch (basic and acidic residues) spans 42-56 (SSQERETEKAMDRLA). S66 and S75 each carry phosphoserine. Residues 78–89 (EGFAMDEEDSDG) show a composition bias toward acidic residues.

In terms of assembly, interacts with PRMT5. Interacts with histone H4; specifically interacts with the N-terminus of histone H4 but not with histone H3. Interacts with CBFB. Found in a complex with PRMT5, RUNX1 and CBFB.

It localises to the nucleus. Functionally, histone-binding protein required for histone H4 methyltransferase activity of PRMT5. Specifically required for histone H4 'Arg-3' methylation mediated by PRMT5, but not histone H3 'Arg-8' methylation, suggesting that it modulates the substrate specificity of PRMT5. Specifically interacts with the N-terminus of histone H4 but not with histone H3, suggesting that it acts by promoting the association between histone H4 and PRMT5. Involved in CCNE1 promoter repression. Plays a role in muscle cell differentiation by modulating the recruitment of PRMT5 to the promoter of genes involved in the coordination between cell cycle exit and muscle differentiation. This is Coordinator of PRMT5 and differentiation stimulator (COPRS) from Homo sapiens (Human).